The following is a 318-amino-acid chain: Isoaspartyl peptidase/L-asparaginase (318 aa).

The active-site Nucleophile is the threonine 180. Substrate-binding positions include 208-211 and 229-232; these read RVSD and TGIG.

The protein belongs to the Ntn-hydrolase family. As to quaternary structure, heterotetramer of two alpha and two beta chains arranged as a dimer of alpha/beta heterodimers. Post-translationally, cleaved into an alpha and beta chain by autocatalysis; this activates the enzyme. The N-terminal residue of the beta subunit is responsible for the nucleophile hydrolase activity.

It carries out the reaction Cleavage of a beta-linked Asp residue from the N-terminus of a polypeptide.. In terms of biological role, degrades proteins damaged by L-isoaspartyl residue formation (also known as beta-Asp residues). Probably performs the final step in the degradation of the reserve polymer cyanophycin (depolymerizes the building block L-beta-Asp-Arg). Also has L-asparaginase activity. The chain is Isoaspartyl peptidase/L-asparaginase from Nostoc sp. (strain PCC 7120 / SAG 25.82 / UTEX 2576).